The following is an 84-amino-acid chain: Omega-conotoxin-like ArMKLT1-02 (84 aa).

A signal peptide spans 1–22; it reads MKVTCMMIVAVLFLTAWTFVTA. Residues 23 to 51 constitute a propeptide that is removed on maturation; it reads DDSISALEDLFAKAHDKMENSEASPLNER. Cystine bridges form between Cys53–Cys71, Cys60–Cys75, and Cys70–Cys79.

Belongs to the conotoxin O1 superfamily. As to expression, expressed by the venom duct.

Its subcellular location is the secreted. Omega-conotoxins act at presynaptic membranes, they bind and block voltage-gated calcium channels (Cav). The protein is Omega-conotoxin-like ArMKLT1-02 of Conus arenatus (Sand-dusted cone).